We begin with the raw amino-acid sequence, 389 residues long: Chalcone synthase 2 (389 aa).

Residue C164 is part of the active site.

It belongs to the thiolase-like superfamily. Chalcone/stilbene synthases family.

It catalyses the reaction (E)-4-coumaroyl-CoA + 3 malonyl-CoA + 3 H(+) = 2',4,4',6'-tetrahydroxychalcone + 3 CO2 + 4 CoA. It participates in secondary metabolite biosynthesis; flavonoid biosynthesis. Functionally, the primary product of this enzyme is 4,2',4',6'-tetrahydroxychalcone (also termed naringenin-chalcone or chalcone) which can under specific conditions spontaneously isomerize into naringenin. This is Chalcone synthase 2 (CHS2) from Solanum lycopersicum (Tomato).